We begin with the raw amino-acid sequence, 571 residues long: MSHQPLSCLTEKGDSPSESTGNGPPHLAHPNLDTFTPEELLQQMKELLTENHQLKEAMKLNNQAMKGRFEELSAWTEKQKEERQFFETQSKEAKERLMALSHENEKLKEELGKLKGKSERSSEDPTGDSRLPRAEAEQEKDQLRTQVTRLQAEKADLLGIVSELQLKLNSSGSSEDSFVEIRMAEGEAEGSVKEIKHSPGPTRTVSIGTSRSAEGAKNYLEHEELTVSQLLLCLREGNQKVERLEIALKEAKERVSDFEKKASNRSEIETQTEGSTEKENEEEKGPETVGSEVEALNLQVTSLFKELQEAHTKLSEAELMKKRLQEKCQALERKNSATPSELNEKQELVYTNKKLELQVESMLSEIKMEQAKTEDEKSKLAMLQLTHNKLLQEHNHALKTIEELTRKESEKVDRAVLKELSEKLELAEKALASKQLQMDEMKQTIAKQEEDLETMTVLRAQMEVYCSDFHAERAAREKIHEEKEQLALQLAVLLKENDAFEDGGRQSLMEMQSRHGARTSDPDQQAYLVQRGTEDRDWQQQRNIPIHSCPKCGEVLPDIDTLQIHVMDCII.

Disordered regions lie at residues 1–32 (MSHQPLSCLTEKGDSPSESTGNGPPHLAHPNL) and 100–144 (LSHE…DQLR). A coiled-coil region spans residues 38 to 170 (EELLQQMKEL…VSELQLKLNS (133 aa)). The segment at 58–209 (MKLNNQAMKG…GPTRTVSIGT (152 aa)) is interaction with Rab8. 2 stretches are compositionally biased toward basic and acidic residues: residues 100 to 123 (LSHENEKLKEELGKLKGKSERSSE) and 130 to 143 (RLPRAEAEQEKDQL). The short motif at 176–181 (DSFVEI) is the LIR element. Ser-177 carries the phosphoserine; by TBK1 modification. Residues 186–197 (GEAEGSVKEIKH) are compositionally biased toward basic and acidic residues. Disordered regions lie at residues 186 to 210 (GEAEGSVKEIKHSPGPTRTVSIGTS) and 255 to 291 (VSDFEKKASNRSEIETQTEGSTEKENEEEKGPETVGS). The residue at position 198 (Ser-198) is a Phosphoserine. Residues 201 to 210 (PTRTVSIGTS) are compositionally biased toward polar residues. The stretch at 233–502 (CLREGNQKVE…LLKENDAFED (270 aa)) forms a coiled coil. Composition is skewed to basic and acidic residues over residues 255 to 268 (VSDFEKKASNRSEI) and 275 to 286 (STEKENEEEKGP). Residue Ser-336 is modified to Phosphoserine. The interaction with HD stretch occupies residues 405–571 (TRKESEKVDR…LQIHVMDCII (167 aa)). The segment at 406–514 (RKESEKVDRA…RQSLMEMQSR (109 aa)) is interaction with MYO6. A UBAN motif is present at residues 468 to 473 (DFHAER). Ser-520 carries the post-translational modification Phosphoserine. The CCHC NOA-type zinc-finger motif lies at 541 to 571 (QRNIPIHSCPKCGEVLPDIDTLQIHVMDCII). The Zn(2+) site is built by Cys-549, Cys-552, His-565, and Cys-569.

Self-associates. Interacts with HD. Interacts with GTF3A. Interacts with MYO6. Interacts (via UBAN) with ubiquitinated TFRC. Interacts with GTP-bound Rab8 (RAB8A and/or RAB8B). Interacts with TBC1D17. Interacts with TBK1. Interacts with TRAF3. Binds to linear ubiquitin chains. Interacts with LC3 family members MAP1LC3A, MAP1LC3B, GABARAP, GABARAPL1 and GABARAPL2; OPTN phosphorylation increases the association (at least with MAP1LC3B). Interacts with RAB12; the interaction may be indirect. Interacts with TBK1; this interaction leads to the Golgi localization of TBK1 and its subsequent activation. Interacts with palmitoyltransferase ZDHHC17/HIP14; the interaction does not lead to palmitoylation of OPTN. Interacts with CYLD. Interacts with TOM1; the interaction is indirect and is mediated by MYO6, which acts as a bridge between TOM1 and OPTN. Interacts with USP12; the interaction is independent of USP12 deubiquitinase activity and may be involved in regulation of autophagic flux. Phosphorylated by TBK1, leading to restrict bacterial proliferation in case of infection.

Its subcellular location is the cytoplasm. It localises to the perinuclear region. It is found in the golgi apparatus. The protein resides in the trans-Golgi network. The protein localises to the cytoplasmic vesicle. Its subcellular location is the autophagosome. It localises to the recycling endosome. Plays an important role in the maintenance of the Golgi complex, in membrane trafficking, in exocytosis, through its interaction with myosin VI and Rab8. Links myosin VI to the Golgi complex and plays an important role in Golgi ribbon formation. Negatively regulates the induction of IFNB in response to RNA virus infection. Plays a neuroprotective role in the eye and optic nerve. Probably part of the TNF-alpha signaling pathway that can shift the equilibrium toward induction of cell death. May act by regulating membrane trafficking and cellular morphogenesis via a complex that contains Rab8 and huntingtin (HD). Mediates the interaction of Rab8 with the probable GTPase-activating protein TBC1D17 during Rab8-mediated endocytic trafficking, such as that of transferrin receptor (TFRC/TfR); regulates Rab8 recruitment to tubules emanating from the endocytic recycling compartment. Autophagy receptor that interacts directly with both the cargo to become degraded and an autophagy modifier of the MAP1 LC3 family; targets ubiquitin-coated bacteria (xenophagy) and appears to function in the same pathway as SQSTM1 and CALCOCO2/NDP52. The chain is Optineurin (OPTN) from Macaca fascicularis (Crab-eating macaque).